Here is a 451-residue protein sequence, read N- to C-terminus: UPF0761 membrane protein Hhal_0704 (451 aa).

6 helical membrane-spanning segments follow: residues 66–86 (LLAI…FPVF), 122–142 (ELTA…LNTI), 162–182 (FMVY…SVAS), 204–224 (LLNL…YSLV), 228–248 (SVPV…FELA), and 268–288 (ALAA…VILI).

It belongs to the UPF0761 family.

Its subcellular location is the cell inner membrane. The protein is UPF0761 membrane protein Hhal_0704 of Halorhodospira halophila (strain DSM 244 / SL1) (Ectothiorhodospira halophila (strain DSM 244 / SL1)).